The sequence spans 372 residues: Aminomethyltransferase (372 aa).

It belongs to the GcvT family. In terms of assembly, the glycine cleavage system is composed of four proteins: P, T, L and H.

It carries out the reaction N(6)-[(R)-S(8)-aminomethyldihydrolipoyl]-L-lysyl-[protein] + (6S)-5,6,7,8-tetrahydrofolate = N(6)-[(R)-dihydrolipoyl]-L-lysyl-[protein] + (6R)-5,10-methylene-5,6,7,8-tetrahydrofolate + NH4(+). Its function is as follows. The glycine cleavage system catalyzes the degradation of glycine. This chain is Aminomethyltransferase, found in Burkholderia ambifaria (strain MC40-6).